A 348-amino-acid polypeptide reads, in one-letter code: MSDDKSKALAAALAQIEKSFGKGAIMKMDGSQQEENLEVISTGSLGLDLALGVGGLPRGRIVEIFGPESSGKTTLCLEAVAQCQKNGGVCAFVDAEHAFDPVYARKLGVKVEELYLSQPDTGEQALEICDTLVRSGGIDMVVVDSVAALVPKAEIEGDMGDSHVGLQARLMSQALRKLTGHIKKTNTLVVFINQIRMKIGVMFGSPETTTGGNALKFYSSVRLDIRRTGSIKKGEEVLGNETRVKVIKNKVAPPFRQAEFDILYGEGISWEGELIDIGVKNDIINKSGAWYSYNGAKIGQGKDNVRVWLKENPEVANEIDAKIRALNGVEMHITEGTQDETDGERPEE.

66-73 is a binding site for ATP; it reads GPESSGKT.

The protein belongs to the RecA family.

The protein localises to the cytoplasm. Can catalyze the hydrolysis of ATP in the presence of single-stranded DNA, the ATP-dependent uptake of single-stranded DNA by duplex DNA, and the ATP-dependent hybridization of homologous single-stranded DNAs. It interacts with LexA causing its activation and leading to its autocatalytic cleavage. This Neisseria meningitidis serogroup B (strain ATCC BAA-335 / MC58) protein is Protein RecA.